A 1417-amino-acid chain; its full sequence is Cytoadherence-linked asexual protein 3.1 (1417 aa).

The first 24 residues, 1–24 (MVSFFKTPIFILIIFLYLNEKVIC), serve as a signal peptide directing secretion. 4 disulfides stabilise this stretch: C333-C361, C407-C413, C517-C545, and C521-C542. A helical membrane pass occupies residues 1204-1224 (LVNGFMYAFCFFAISQMYAYF). The disordered stretch occupies residues 1383–1417 (TYIDTEKMNEADSADSDDEKDSDTPDDELMISRFH). The segment covering 1394–1411 (DSADSDDEKDSDTPDDEL) has biased composition (acidic residues).

In terms of assembly, self-associates. Component of the RhopH complex. RhopH complex is at least composed of CLAG3.1/CLAG3.2, RhopH2 and RhopH3 with a 1:1:1 subunit stoichiometry. CLAG3.1/CLAG3.2 mediates subunit association through independent contacts with RhopH2 and RhopH3, which do not directly interact with one another. Interacts with RhopH2. Interacts with RhopH3.

Its subcellular location is the host cell membrane. It localises to the host cytoplasm. It is found in the cytoplasmic vesicle. The protein localises to the secretory vesicle. The protein resides in the rhoptry. Its function is as follows. Participates in the formation of new permeability pathways in Plasmodium-infected erythrocytes enabling the uptake of nutrients from the blood plasma. This chain is Cytoadherence-linked asexual protein 3.1, found in Plasmodium falciparum (isolate 3D7).